The primary structure comprises 468 residues: Heat stress transcription factor A-1e (468 aa).

A DNA-binding region spans residues Ile21 to Pro115. The tract at residues Ala133 to Val199 is hydrophobic repeat HR-A/B. The span at Gln211–Ser220 shows a compositional bias: polar residues. Disordered stretches follow at residues Gln211–Leu244 and Gln268–Thr309. The Nuclear localization signal motif lies at Asn223–Arg227. Over residues Ser277–Ser305 the composition is skewed to low complexity. The short motif at Asp402–Glu411 is the AHA element. Positions Leu454–Leu461 match the Nuclear export signal motif.

This sequence belongs to the HSF family. Class A subfamily. In terms of assembly, homotrimer. Exhibits temperature-dependent phosphorylation.

It is found in the cytoplasm. It localises to the nucleus. In terms of biological role, transcriptional activator that specifically binds DNA sequence 5'-AGAAnnTTCT-3' known as heat shock promoter elements (HSE). The chain is Heat stress transcription factor A-1e (HSFA1E) from Arabidopsis thaliana (Mouse-ear cress).